A 1215-amino-acid chain; its full sequence is Kinesin-like protein KIN-7I (1215 aa).

The region spanning 3–327 (RIHVAVRARP…LQFASRALRV (325 aa)) is the Kinesin motor domain. 79–86 (GQTNSGKT) provides a ligand contact to ATP. Coiled coils occupy residues 333–414 (VNEI…IENL), 571–646 (ESEA…AAYE), 708–855 (IRDY…KRDS), and 894–979 (DMEA…KEDM).

It belongs to the TRAFAC class myosin-kinesin ATPase superfamily. Kinesin family. KIN-7 subfamily.

This chain is Kinesin-like protein KIN-7I, found in Oryza sativa subsp. japonica (Rice).